The following is a 318-amino-acid chain: Glycine--tRNA ligase alpha subunit (318 aa).

This sequence belongs to the class-II aminoacyl-tRNA synthetase family. As to quaternary structure, tetramer of two alpha and two beta subunits.

It is found in the cytoplasm. The catalysed reaction is tRNA(Gly) + glycine + ATP = glycyl-tRNA(Gly) + AMP + diphosphate. The polypeptide is Glycine--tRNA ligase alpha subunit (Chelativorans sp. (strain BNC1)).